The following is a 267-amino-acid chain: 4-hydroxy-tetrahydrodipicolinate reductase (267 aa).

Residues 8-13 (GAAGRM) and E34 each bind NAD(+). R35 is a binding site for NADP(+). Residues 98-100 (GST) and 122-125 (APNM) each bind NAD(+). The active-site Proton donor/acceptor is H155. H156 contributes to the (S)-2,3,4,5-tetrahydrodipicolinate binding site. The Proton donor role is filled by K159. 165 to 166 (GT) serves as a coordination point for (S)-2,3,4,5-tetrahydrodipicolinate.

This sequence belongs to the DapB family.

The protein localises to the cytoplasm. It catalyses the reaction (S)-2,3,4,5-tetrahydrodipicolinate + NAD(+) + H2O = (2S,4S)-4-hydroxy-2,3,4,5-tetrahydrodipicolinate + NADH + H(+). The catalysed reaction is (S)-2,3,4,5-tetrahydrodipicolinate + NADP(+) + H2O = (2S,4S)-4-hydroxy-2,3,4,5-tetrahydrodipicolinate + NADPH + H(+). Its pathway is amino-acid biosynthesis; L-lysine biosynthesis via DAP pathway; (S)-tetrahydrodipicolinate from L-aspartate: step 4/4. Its function is as follows. Catalyzes the conversion of 4-hydroxy-tetrahydrodipicolinate (HTPA) to tetrahydrodipicolinate. This Geobacter sp. (strain M21) protein is 4-hydroxy-tetrahydrodipicolinate reductase.